Here is a 507-residue protein sequence, read N- to C-terminus: Aldehyde dehydrogenase 1, mitochondrial (507 aa).

The transit peptide at 1–21 (MLATRNLVPIIRASIKWRIKL) directs the protein to the mitochondrion. 266–271 (GSTLVG) provides a ligand contact to NAD(+). Catalysis depends on residues E289 and C323.

The protein belongs to the aldehyde dehydrogenase family. In terms of assembly, homotetramer.

It localises to the mitochondrion matrix. It carries out the reaction an aldehyde + NAD(+) + H2O = a carboxylate + NADH + 2 H(+). The protein operates within alcohol metabolism; ethanol degradation; acetate from ethanol: step 2/2. In Saccharomyces cerevisiae (Baker's yeast), this protein is Aldehyde dehydrogenase 1, mitochondrial (ALD1).